We begin with the raw amino-acid sequence, 429 residues long: UDP-N-acetylglucosamine 1-carboxyvinyltransferase 2 (429 aa).

22 to 23 (KN) serves as a coordination point for phosphoenolpyruvate. R93 is a binding site for UDP-N-acetyl-alpha-D-glucosamine. C117 (proton donor) is an active-site residue. 2-(S-cysteinyl)pyruvic acid O-phosphothioketal is present on C117. UDP-N-acetyl-alpha-D-glucosamine contacts are provided by residues 122-126 (RPIDQ), D305, and I327.

The protein belongs to the EPSP synthase family. MurA subfamily.

Its subcellular location is the cytoplasm. The catalysed reaction is phosphoenolpyruvate + UDP-N-acetyl-alpha-D-glucosamine = UDP-N-acetyl-3-O-(1-carboxyvinyl)-alpha-D-glucosamine + phosphate. The protein operates within cell wall biogenesis; peptidoglycan biosynthesis. Its function is as follows. Cell wall formation. Adds enolpyruvyl to UDP-N-acetylglucosamine. The polypeptide is UDP-N-acetylglucosamine 1-carboxyvinyltransferase 2 (Bacillus cereus (strain ATCC 14579 / DSM 31 / CCUG 7414 / JCM 2152 / NBRC 15305 / NCIMB 9373 / NCTC 2599 / NRRL B-3711)).